A 121-amino-acid polypeptide reads, in one-letter code: Centrocin 2 (121 aa).

The signal sequence occupies residues 1 to 20 (MMIKIAVVLCAVMATSMVFA). Positions 21–50 (NDVKEQELADLLDLLISEEVSSPDDAVAES) are excised as a propeptide. Trp51 and Trp59 each carry 6'-bromotryptophan. A disulfide bond links Cys77 and Cys112. Residues 83-106 (SPQEARAKVLEAFPEMKESDLDEE) constitute a propeptide that is removed on maturation. Gln107 carries the pyrrolidone carboxylic acid modification. Position 119 is a histidine amide (His119).

In terms of assembly, heterodimer of a light and a heavy chain, probably disulfide-linked.

Its function is as follows. Has antimicrobial activity against Gram-negative bacteria, Gram-positive bacteria and against fungi with minimum inhibitory concentration (MIC) between 0.78 uM and 50 uM. Shows little hemolytic activity at concentrations up to 12.5 uM but &gt;50% lysis at 100 uM. This chain is Centrocin 2, found in Echinus esculentus (Sea urchin).